Reading from the N-terminus, the 425-residue chain is Histidine--tRNA ligase 1 (425 aa).

It belongs to the class-II aminoacyl-tRNA synthetase family. Homodimer.

It localises to the cytoplasm. It catalyses the reaction tRNA(His) + L-histidine + ATP = L-histidyl-tRNA(His) + AMP + diphosphate + H(+). The sequence is that of Histidine--tRNA ligase 1 from Bacillus thuringiensis subsp. konkukian (strain 97-27).